Reading from the N-terminus, the 185-residue chain is Potassium-transporting ATPase KdpC subunit (185 aa).

Residues alanine 14–isoleucine 34 traverse the membrane as a helical segment.

This sequence belongs to the KdpC family. The system is composed of three essential subunits: KdpA, KdpB and KdpC.

It is found in the cell inner membrane. Part of the high-affinity ATP-driven potassium transport (or Kdp) system, which catalyzes the hydrolysis of ATP coupled with the electrogenic transport of potassium into the cytoplasm. This subunit acts as a catalytic chaperone that increases the ATP-binding affinity of the ATP-hydrolyzing subunit KdpB by the formation of a transient KdpB/KdpC/ATP ternary complex. This chain is Potassium-transporting ATPase KdpC subunit, found in Cereibacter sphaeroides (strain KD131 / KCTC 12085) (Rhodobacter sphaeroides).